A 283-amino-acid polypeptide reads, in one-letter code: Putative sugar uptake protein BC_0219 (283 aa).

10 helical membrane passes run 4 to 21 (LLAL…LVSV), 26 to 48 (GAYS…MYVF), 52 to 71 (ALTM…WALG), 84 to 106 (VSTT…GVIA), 110 to 132 (WTTT…GVVF), 151 to 173 (LLTL…WYNI), 178 to 195 (AILP…VLTS), 208 to 230 (ALSG…RVGV), 234 to 253 (FPLS…VFLG), and 260 to 279 (QLIF…VLLG).

This sequence belongs to the GRP transporter (TC 2.A.7.5) family.

The protein localises to the cell membrane. The sequence is that of Putative sugar uptake protein BC_0219 from Bacillus cereus (strain ATCC 14579 / DSM 31 / CCUG 7414 / JCM 2152 / NBRC 15305 / NCIMB 9373 / NCTC 2599 / NRRL B-3711).